A 90-amino-acid polypeptide reads, in one-letter code: Small ribosomal subunit protein bS16 (90 aa).

The protein belongs to the bacterial ribosomal protein bS16 family.

In Streptococcus sanguinis (strain SK36), this protein is Small ribosomal subunit protein bS16.